The primary structure comprises 353 residues: Putative glycosyltransferase TagX (353 aa).

Belongs to the glycosyltransferase 2 family.

The sequence is that of Putative glycosyltransferase TagX (tagX) from Staphylococcus aureus (strain Mu50 / ATCC 700699).